We begin with the raw amino-acid sequence, 424 residues long: Histidine--tRNA ligase (424 aa).

Belongs to the class-II aminoacyl-tRNA synthetase family. Homodimer.

Its subcellular location is the cytoplasm. It catalyses the reaction tRNA(His) + L-histidine + ATP = L-histidyl-tRNA(His) + AMP + diphosphate + H(+). This chain is Histidine--tRNA ligase, found in Salmonella agona (strain SL483).